We begin with the raw amino-acid sequence, 141 residues long: Large ribosomal subunit protein uL14 (141 aa).

This sequence belongs to the universal ribosomal protein uL14 family. In terms of assembly, part of the 50S ribosomal subunit. Forms a cluster with proteins L3 and L24e, part of which may contact the 16S rRNA in 2 intersubunit bridges.

Its function is as follows. Binds to 23S rRNA. Forms part of two intersubunit bridges in the 70S ribosome. This Thermofilum pendens (strain DSM 2475 / Hrk 5) protein is Large ribosomal subunit protein uL14.